Here is a 224-residue protein sequence, read N- to C-terminus: Peroxiredoxin-6 (224 aa).

Positions 5–169 (LLLGDEAPNF…ILRVVDSLQL (165 aa)) constitute a Thioredoxin domain. Residues 31–40 (DSWGILFSHP) are required and sufficient for targeting to lysosomes and lamellar bodies. Threonine 44 bears the Phosphothreonine mark. Cysteine 47 serves as the catalytic Cysteine sulfenic acid (-SOH) intermediate; for peroxidase activity. Lysine 63 bears the N6-acetyllysine mark. At tyrosine 89 the chain carries Phosphotyrosine. The residue at position 93 (threonine 93) is a Phosphothreonine. Catalysis depends on aspartate 140, which acts as the For phospholipase activity. Phosphothreonine; by MAPK is present on threonine 177. At lysine 209 the chain carries N6-acetyllysine; alternate. Lysine 209 bears the N6-succinyllysine; alternate mark.

The protein belongs to the peroxiredoxin family. Prx6 subfamily. In terms of assembly, homodimer. Interacts with GSTP1; mediates PRDX6 glutathionylation and regeneration. Interacts with APEX1. Interacts with STH. May interact with FAM168B. May interact with HTR2A. In terms of processing, irreversibly inactivated by overoxidation of Cys-47 to sulfinic acid (Cys-SO(2)H) and sulfonic acid (Cys-SO(3)H) forms upon oxidative stress. Post-translationally, phosphorylation at Thr-177 by MAP kinases increases the phospholipase activity of the enzyme. The phosphorylated form exhibits a greater lysophosphatidylcholine acyltransferase activity compared to the non-phosphorylated form. In terms of tissue distribution, highly expressed in heart, kidney and liver. Moderate expression in brain and stomach. Very low levels in intestine.

Its subcellular location is the cytoplasm. It is found in the lysosome. The catalysed reaction is a hydroperoxide + 2 glutathione = an alcohol + glutathione disulfide + H2O. It carries out the reaction a 1,2-diacyl-sn-glycero-3-phosphocholine + H2O = a 1-acyl-sn-glycero-3-phosphocholine + a fatty acid + H(+). It catalyses the reaction a 1-acyl-sn-glycero-3-phosphocholine + an acyl-CoA = a 1,2-diacyl-sn-glycero-3-phosphocholine + CoA. The enzyme catalyses 1-hexadecanoyl-sn-glycero-3-phosphocholine + hexadecanoyl-CoA = 1,2-dihexadecanoyl-sn-glycero-3-phosphocholine + CoA. The catalysed reaction is 1,2-dihexadecanoyl-sn-glycero-3-phosphocholine + H2O = 1-hexadecanoyl-sn-glycero-3-phosphocholine + hexadecanoate + H(+). Its activity is regulated as follows. MJ33 or lithium;[(2R)-1-hexadecoxy-3-(2,2,2-trifluoroethoxy)propan-2-yl] methyl phosphate inhibits its phospholipase A2 activity. CI-976 or 2,2-Dimethyl-N-(2,4,6-trimethoxyphenyl)dodecanamide inhibits its lysophosphatidylcholine acyltransferase activity. Thiol-specific peroxidase that catalyzes the reduction of hydrogen peroxide and organic hydroperoxides to water and alcohols, respectively. Can reduce H(2)O(2) and short chain organic, fatty acid, and phospholipid hydroperoxides. Has phospholipase activity. Can either reduce the oxidized sn-2 fatty acyl group of phospholipids (peroxidase activity) or hydrolyze the sn-2 ester bond of phospholipids (phospholipase activity). These activities are dependent on binding to phospholipids at acidic pH and to oxidized phospholipds at cytosolic pH. Plays a role in cell protection against oxidative stress by detoxifying peroxides and in phospholipid homeostasis. Exhibits acyl-CoA-dependent lysophospholipid acyltransferase which mediates the conversion of lysophosphatidylcholine (1-acyl-sn-glycero-3-phosphocholine or LPC) into phosphatidylcholine (1,2-diacyl-sn-glycero-3-phosphocholine or PC). Shows a clear preference for LPC as the lysophospholipid and for palmitoyl CoA as the fatty acyl substrate. This is Peroxiredoxin-6 (Prdx6) from Mus musculus (Mouse).